The following is a 379-amino-acid chain: Succinyl-diaminopimelate desuccinylase (379 aa).

Histidine 70 is a Zn(2+) binding site. The active site involves aspartate 72. Aspartate 103 contacts Zn(2+). The active-site Proton acceptor is the glutamate 137. Glutamate 138, glutamate 166, and histidine 352 together coordinate Zn(2+).

This sequence belongs to the peptidase M20A family. DapE subfamily. Homodimer. Requires Zn(2+) as cofactor. It depends on Co(2+) as a cofactor.

The catalysed reaction is N-succinyl-(2S,6S)-2,6-diaminopimelate + H2O = (2S,6S)-2,6-diaminopimelate + succinate. Its pathway is amino-acid biosynthesis; L-lysine biosynthesis via DAP pathway; LL-2,6-diaminopimelate from (S)-tetrahydrodipicolinate (succinylase route): step 3/3. In terms of biological role, catalyzes the hydrolysis of N-succinyl-L,L-diaminopimelic acid (SDAP), forming succinate and LL-2,6-diaminopimelate (DAP), an intermediate involved in the bacterial biosynthesis of lysine and meso-diaminopimelic acid, an essential component of bacterial cell walls. In Burkholderia ambifaria (strain ATCC BAA-244 / DSM 16087 / CCUG 44356 / LMG 19182 / AMMD) (Burkholderia cepacia (strain AMMD)), this protein is Succinyl-diaminopimelate desuccinylase.